Reading from the N-terminus, the 336-residue chain is Ferredoxin--NADP reductase (336 aa).

Positions 37, 45, 50, 90, 124, 286, and 327 each coordinate FAD.

The protein belongs to the ferredoxin--NADP reductase type 2 family. As to quaternary structure, homodimer. FAD is required as a cofactor.

It catalyses the reaction 2 reduced [2Fe-2S]-[ferredoxin] + NADP(+) + H(+) = 2 oxidized [2Fe-2S]-[ferredoxin] + NADPH. This is Ferredoxin--NADP reductase from Enterococcus faecalis (strain ATCC 700802 / V583).